Consider the following 172-residue polypeptide: Cell division protein SepF (172 aa).

The tract at residues 16–78 (DGDEHYEPQP…RAASNRDDSS (63 aa)) is disordered. Basic and acidic residues predominate over residues 17 to 48 (GDEHYEPQPEGKQTRPAQKNEEYVDQEIRHTE).

This sequence belongs to the SepF family. In terms of assembly, homodimer. Interacts with FtsZ.

Its subcellular location is the cytoplasm. Cell division protein that is part of the divisome complex and is recruited early to the Z-ring. Probably stimulates Z-ring formation, perhaps through the cross-linking of FtsZ protofilaments. Its function overlaps with FtsA. The polypeptide is Cell division protein SepF (Renibacterium salmoninarum (strain ATCC 33209 / DSM 20767 / JCM 11484 / NBRC 15589 / NCIMB 2235)).